Consider the following 255-residue polypeptide: Ditrans,polycis-undecaprenyl-diphosphate synthase ((2E,6E)-farnesyl-diphosphate specific) (255 aa).

Residue Asp21 is part of the active site. Asp21 provides a ligand contact to Mg(2+). Substrate is bound by residues 22–25 (GNGR), Trp26, Arg34, His38, and 66–68 (SSE). Asn69 (proton acceptor) is an active-site residue. Substrate is bound by residues Trp70, Arg72, Arg189, and 195–197 (RIS). Mg(2+) is bound at residue Glu208.

This sequence belongs to the UPP synthase family. Homodimer. Mg(2+) serves as cofactor.

It catalyses the reaction 8 isopentenyl diphosphate + (2E,6E)-farnesyl diphosphate = di-trans,octa-cis-undecaprenyl diphosphate + 8 diphosphate. Its function is as follows. Catalyzes the sequential condensation of isopentenyl diphosphate (IPP) with (2E,6E)-farnesyl diphosphate (E,E-FPP) to yield (2Z,6Z,10Z,14Z,18Z,22Z,26Z,30Z,34E,38E)-undecaprenyl diphosphate (di-trans,octa-cis-UPP). UPP is the precursor of glycosyl carrier lipid in the biosynthesis of bacterial cell wall polysaccharide components such as peptidoglycan and lipopolysaccharide. This chain is Ditrans,polycis-undecaprenyl-diphosphate synthase ((2E,6E)-farnesyl-diphosphate specific), found in Xylella fastidiosa (strain Temecula1 / ATCC 700964).